Here is a 720-residue protein sequence, read N- to C-terminus: Protein-glutamine gamma-glutamyltransferase 5 (720 aa).

A2 is subject to N-acetylalanine. Residues C278, H337, and D360 contribute to the active site. 4 residues coordinate Ca(2+): N400, D402, E448, and E453. The disordered stretch occupies residues 470–499; the sequence is HGSQRGAELQPSRPTSLSQDSPRSLHTPSL. The segment covering 481–496 has biased composition (polar residues); that stretch reads SRPTSLSQDSPRSLHT.

Belongs to the transglutaminase superfamily. Transglutaminase family. It depends on Ca(2+) as a cofactor. Expressed in foreskin keratinocytes.

It localises to the cytoplasm. The catalysed reaction is L-glutaminyl-[protein] + L-lysyl-[protein] = [protein]-L-lysyl-N(6)-5-L-glutamyl-[protein] + NH4(+). In terms of biological role, catalyzes the cross-linking of proteins and the conjugation of polyamines to proteins. Contributes to the formation of the cornified cell envelope of keratinocytes. The chain is Protein-glutamine gamma-glutamyltransferase 5 (TGM5) from Homo sapiens (Human).